The primary structure comprises 188 residues: Shikimate kinase (188 aa).

Residue 21 to 26 (GAGKTT) coordinates ATP. Residue threonine 25 coordinates Mg(2+). 3 residues coordinate substrate: aspartate 43, arginine 67, and glycine 90. Residue arginine 130 participates in ATP binding. Arginine 148 contacts substrate.

It belongs to the shikimate kinase family. As to quaternary structure, monomer. Mg(2+) serves as cofactor.

The protein resides in the cytoplasm. It carries out the reaction shikimate + ATP = 3-phosphoshikimate + ADP + H(+). Its pathway is metabolic intermediate biosynthesis; chorismate biosynthesis; chorismate from D-erythrose 4-phosphate and phosphoenolpyruvate: step 5/7. Its function is as follows. Catalyzes the specific phosphorylation of the 3-hydroxyl group of shikimic acid using ATP as a cosubstrate. This is Shikimate kinase from Geobacillus thermodenitrificans (strain NG80-2).